A 478-amino-acid polypeptide reads, in one-letter code: Stromelysin-1 (478 aa).

The first 17 residues, 1–17 (MQNLPALLLFCGVVCSA), serve as a signal peptide directing secretion. Residues 18-99 (YPVDRAAEDE…PRCGVPDVGD (82 aa)) constitute a propeptide, activation peptide. Residues 90–97 (PRCGVPDV) carry the Cysteine switch motif. Cys92 provides a ligand contact to Zn(2+). Residues Asp124 and Asp158 each contribute to the Ca(2+) site. Zn(2+) contacts are provided by His168 and Asp170. Residues Asp175, Gly176, Gly178, and Val180 each coordinate Ca(2+). Residue His183 coordinates Zn(2+). Ca(2+)-binding residues include Gly190 and Asp194. A Zn(2+)-binding site is contributed by His196. Residues Asp198, Asp199, and Glu201 each contribute to the Ca(2+) site. Zn(2+) is bound at residue His218. Glu219 is a catalytic residue. Zn(2+) is bound by residues His222 and His228. Positions 260–286 (QSLYGGPPSDSSNDPVVPTESVPPGPG) are disordered. Residues 266-277 (PPSDSSNDPVVP) show a composition bias toward low complexity. Hemopexin repeat units follow at residues 288–337 (PAAC…WPSL), 338–384 (PSGL…GFPP), 386–434 (VKKI…FPGV), and 435–478 (DSKV…WLNC). An intrachain disulfide couples Cys291 to Cys478. Asp298 lines the Ca(2+) pocket. Positions 390 and 439 each coordinate Ca(2+). N-linked (GlcNAc...) asparagine glycosylation occurs at Asn452.

It belongs to the peptidase M10A family. The cofactor is Ca(2+). Requires Zn(2+) as cofactor.

The protein localises to the secreted. It is found in the extracellular space. Its subcellular location is the extracellular matrix. The enzyme catalyses Preferential cleavage where P1', P2' and P3' are hydrophobic residues.. Functionally, metalloproteinase with a rather broad substrate specificity that can degrade fibronectin, laminin, gelatins of type I, III, IV, and V; collagens III, IV, X, and IX, and cartilage proteoglycans. Activates different molecules including growth factors, plasminogen or other matrix metalloproteinases such as MMP9. Once released into the extracellular matrix (ECM), the inactive pro-enzyme is activated by the plasmin cascade signaling pathway. Also acts intracellularly. For example, in dopaminergic neurons, gets activated by the serine protease HTRA2 upon stress and plays a pivotal role in DA neuronal degeneration by mediating microglial activation and alpha-synuclein/SNCA cleavage. In addition, plays a role in immune response and possesses antiviral activity against various viruses. Mechanistically, translocates from the cytoplasm into the cell nucleus upon virus infection to influence NF-kappa-B activities. The sequence is that of Stromelysin-1 (MMP3) from Canis lupus familiaris (Dog).